The sequence spans 176 residues: Lipoprotein signal peptidase (176 aa).

The next 3 helical transmembrane spans lie at 12–32 (WYWM…WVLA), 67–87 (WQRW…TIWL), and 94–116 (MWRL…IDRL). Residues Asp-123 and Asp-141 contribute to the active site. The helical transmembrane segment at 137 to 157 (FNIADSAICVGAALIIIDSII) threads the bilayer.

This sequence belongs to the peptidase A8 family.

It is found in the cell inner membrane. It carries out the reaction Release of signal peptides from bacterial membrane prolipoproteins. Hydrolyzes -Xaa-Yaa-Zaa-|-(S,diacylglyceryl)Cys-, in which Xaa is hydrophobic (preferably Leu), and Yaa (Ala or Ser) and Zaa (Gly or Ala) have small, neutral side chains.. It participates in protein modification; lipoprotein biosynthesis (signal peptide cleavage). Functionally, this protein specifically catalyzes the removal of signal peptides from prolipoproteins. The polypeptide is Lipoprotein signal peptidase (Shewanella woodyi (strain ATCC 51908 / MS32)).